Here is a 94-residue protein sequence, read N- to C-terminus: Small ribosomal subunit protein uS19 (94 aa).

The protein belongs to the universal ribosomal protein uS19 family.

In terms of biological role, protein S19 forms a complex with S13 that binds strongly to the 16S ribosomal RNA. The sequence is that of Small ribosomal subunit protein uS19 from Clostridium botulinum (strain Langeland / NCTC 10281 / Type F).